The following is a 475-amino-acid chain: Nucleoporin-like protein amo1 (475 aa).

A C3H1-type zinc finger spans residues 1 to 25 (MVVCKYFLQNRCRYGTNCKNQHTVP). Positions 165 to 182 (DKSTSNSTVTSNQFNKPT) are enriched in polar residues. Disordered regions lie at residues 165–208 (DKST…DIFG) and 220–252 (NASPFSQNTSSNSFTGSNPVQNNPSSFGSSSFG). The span at 183–204 (QNSPFNSFSNNNNSFNNNQQAN) shows a compositional bias: low complexity. Residues 220–242 (NASPFSQNTSSNSFTGSNPVQNN) show a composition bias toward polar residues. Over residues 243 to 252 (PSSFGSSSFG) the composition is skewed to low complexity.

Its subcellular location is the nucleus. Involved in the cell polarity process where it is required for the correct termination of microtubule growth at the cell ends during interphase. The protein is Nucleoporin-like protein amo1 (amo1) of Schizosaccharomyces pombe (strain 972 / ATCC 24843) (Fission yeast).